The primary structure comprises 89 residues: Small ribosomal subunit protein uS19 (89 aa).

It belongs to the universal ribosomal protein uS19 family.

Its function is as follows. Protein S19 forms a complex with S13 that binds strongly to the 16S ribosomal RNA. The polypeptide is Small ribosomal subunit protein uS19 (Phocaeicola vulgatus (strain ATCC 8482 / DSM 1447 / JCM 5826 / CCUG 4940 / NBRC 14291 / NCTC 11154) (Bacteroides vulgatus)).